Reading from the N-terminus, the 664-residue chain is Intraflagellar transport protein 70A1 (664 aa).

TPR repeat units lie at residues 11 to 44, 45 to 78, 153 to 186, 188 to 220, 393 to 423, 424 to 456, and 458 to 491; these read DGEF…SSRS, RAGL…HPEL, PDGL…SGYQ, DLSY…GIRQ, TKQV…EKYI, PVLM…CNDH, and VWKL…NYDN. Residues 507-534 are a coiled coil; sequence YIMTSQNEEAEELMRKIEKEEEQLSYGD. Residues 543-576 form a TPR 8 repeat; the sequence is CIVNLVIGTLYCAKGNYDFGISRVIKSLEPYHKK.

The protein belongs to the TTC30/dfy-1/fleer family. Interacts wit the IFT B complex component IFT52.

It localises to the cell projection. The protein resides in the cilium. Functionally, required for polyglutamylation of axonemal tubulin. Plays a role in anterograde intraflagellar transport (IFT), the process by which cilia precursors are transported from the base of the cilium to the site of their incorporation at the tip. The sequence is that of Intraflagellar transport protein 70A1 (Ift70a1) from Mus musculus (Mouse).